The chain runs to 263 residues: Endonuclease 8 (263 aa).

The active-site Schiff-base intermediate with DNA is P2. E3 serves as the catalytic Proton donor. The Proton donor; for beta-elimination activity role is filled by K53. Residues Q70, R125, and N169 each coordinate DNA. The FPG-type zinc finger occupies 229–263; the sequence is KLFHRDGEACERCGGIIEKTTLSSRPFYWCPHCQK. R253 functions as the Proton donor; for delta-elimination activity in the catalytic mechanism.

It belongs to the FPG family. It depends on Zn(2+) as a cofactor.

The catalysed reaction is 2'-deoxyribonucleotide-(2'-deoxyribose 5'-phosphate)-2'-deoxyribonucleotide-DNA = a 3'-end 2'-deoxyribonucleotide-(2,3-dehydro-2,3-deoxyribose 5'-phosphate)-DNA + a 5'-end 5'-phospho-2'-deoxyribonucleoside-DNA + H(+). Involved in base excision repair of DNA damaged by oxidation or by mutagenic agents. Acts as a DNA glycosylase that recognizes and removes damaged bases. Has a preference for oxidized pyrimidines, such as thymine glycol, 5,6-dihydrouracil and 5,6-dihydrothymine. Has AP (apurinic/apyrimidinic) lyase activity and introduces nicks in the DNA strand. Cleaves the DNA backbone by beta-delta elimination to generate a single-strand break at the site of the removed base with both 3'- and 5'-phosphates. The chain is Endonuclease 8 from Salmonella typhimurium (strain SL1344).